The following is a 283-amino-acid chain: Putative replication protein XF_b0001 (283 aa).

This is Putative replication protein XF_b0001 from Xylella fastidiosa (strain 9a5c).